We begin with the raw amino-acid sequence, 206 residues long: Orotate phosphoribosyltransferase (206 aa).

Residues lysine 26, tyrosine 72–lysine 73, arginine 99, lysine 100, lysine 103, histidine 105, and aspartate 124–serine 132 each bind 5-phospho-alpha-D-ribose 1-diphosphate. Residues threonine 128 and arginine 157 each coordinate orotate.

The protein belongs to the purine/pyrimidine phosphoribosyltransferase family. PyrE subfamily. As to quaternary structure, homodimer. It depends on Mg(2+) as a cofactor.

It carries out the reaction orotidine 5'-phosphate + diphosphate = orotate + 5-phospho-alpha-D-ribose 1-diphosphate. Its pathway is pyrimidine metabolism; UMP biosynthesis via de novo pathway; UMP from orotate: step 1/2. In terms of biological role, catalyzes the transfer of a ribosyl phosphate group from 5-phosphoribose 1-diphosphate to orotate, leading to the formation of orotidine monophosphate (OMP). The chain is Orotate phosphoribosyltransferase from Buchnera aphidicola subsp. Baizongia pistaciae (strain Bp).